The following is a 392-amino-acid chain: DNA replication and repair protein RecF (392 aa).

30–37 (GPNAAGKT) provides a ligand contact to ATP.

The protein belongs to the RecF family.

It localises to the cytoplasm. Its function is as follows. The RecF protein is involved in DNA metabolism; it is required for DNA replication and normal SOS inducibility. RecF binds preferentially to single-stranded, linear DNA. It also seems to bind ATP. This Chloroflexus aurantiacus (strain ATCC 29364 / DSM 637 / Y-400-fl) protein is DNA replication and repair protein RecF.